Reading from the N-terminus, the 57-residue chain is UPF0057 membrane protein T23F2.3 (57 aa).

2 helical membrane passes run 4 to 24 and 36 to 56; these read TCTDIPKFICAVLLPPIGVFL and ILLTILGYIPGIIYACYVILA.

It belongs to the UPF0057 (PMP3) family.

The protein resides in the membrane. The chain is UPF0057 membrane protein T23F2.3 from Caenorhabditis elegans.